The sequence spans 379 residues: ATP-sensitive inward rectifier potassium channel 10 (379 aa).

The Cytoplasmic segment spans residues Met1 to Asp61. Arg36 is a 1,2-dioctanoyl-sn-glycero-3-phospho-(1D-myo-inositol-4,5-bisphosphate) binding site. A helical transmembrane segment spans residues Met62 to Leu88. The Extracellular segment spans residues Val89–Thr114. Cys108 and Cys140 are joined by a disulfide. The segment at residues Leu115–Tyr131 is an intramembrane region (discontinuously helical; Pore-forming). Positions Thr128–Phe133 match the Selectivity filter motif. The Extracellular segment spans residues Gly132–Cys140. A helical membrane pass occupies residues Pro141 to Leu166. The Cytoplasmic portion of the chain corresponds to Ala167–Val379. 1,2-dioctanoyl-sn-glycero-3-phospho-(1D-myo-inositol-4,5-bisphosphate) is bound by residues Lys168, Arg171, and Lys173. Gly210–Leu217 serves as a coordination point for ATP.

The protein belongs to the inward rectifier-type potassium channel (TC 1.A.2.1) family. KCNJ10 subfamily. In terms of assembly, homotetramer. In kidney cells, it forms heteromeric channels with Kir5.1/KCNJ16; this interaction is required for KCNJ16 localization to the basolateral membrane. Interacts with MAGI1, alone and possibly as a heteromer with KCNJ16; this interaction may facilitate KCNJ10/KCNJ16 potassium channel expression at the basolateral membrane in kidney cells. Interacts with PATJ. In terms of tissue distribution, predominantly expressed in the brain, including in glial cells of the cerebellum and forebrain. Expressed at lower levels in the kidney, and other peripheral tissues.

It localises to the membrane. The protein localises to the basolateral cell membrane. It catalyses the reaction K(+)(in) = K(+)(out). Channel activity is strongly regulated by variations of cytosolic pH; channels are activated by alkaline and inhibited by acidic pH values. Activated by phosphatidylinositol 4,5 biphosphate (PtdIns(4,5)P2). Inhibited by Ba(2+) and Cs(+). Its function is as follows. May be responsible for potassium buffering action of glial cells in the brain. Inward rectifier potassium channels are characterized by a greater tendency to allow potassium to flow into the cell rather than out of it. Their voltage dependence is regulated by the concentration of extracellular potassium; as external potassium is raised, the voltage range of the channel opening shifts to more positive voltages. The inward rectification is mainly due to the blockage of outward current by internal magnesium. Can be blocked by extracellular barium and cesium. In the kidney, together with KCNJ16, mediates basolateral K(+) recycling in distal tubules; this process is critical for Na(+) reabsorption at the tubules. In Rattus norvegicus (Rat), this protein is ATP-sensitive inward rectifier potassium channel 10.